The chain runs to 285 residues: TATA box-binding protein-associated factor RNA polymerase I subunit D (285 aa).

2 disordered regions span residues 1–49 (MAQS…RIPT) and 85–112 (KKKR…TRNI). Residues 21–39 (GNQSDDSSNSSLFKTQCVP) are compositionally biased toward polar residues. Ser-24 is modified (phosphoserine). Basic residues predominate over residues 85–104 (KKKRKKRKKRKYKPKLRRQG). Phosphoserine is present on Ser-134. Residues 193–219 (HKYMDDDGPLSPIEEPSTEDEATDPQS) are disordered. Residue Ser-229 is modified to Phosphoserine. Basic and acidic residues-rich tracts occupy residues 242 to 264 (NLEQ…KDAT) and 273 to 285 (KGGE…SEVS). Residues 242 to 285 (NLEQGKIKKESAFSKKSKAKDATQRGNRRSWKGGEHACLHSEVS) form a disordered region.

As to quaternary structure, component of the transcription factor SL1/TIF-IB complex, composed of TBP and at least TAF1A, TAF1B, TAF1C and TAF1D. Interacts with UBTF.

The protein resides in the nucleus. Its function is as follows. Component of the transcription factor SL1/TIF-IB complex, which is involved in the assembly of the PIC (preinitiation complex) during RNA polymerase I-dependent transcription. The rate of PIC formation probably is primarily dependent on the rate of association of SL1/TIF-IB with the rDNA promoter. SL1/TIF-IB is involved in stabilization of nucleolar transcription factor 1/UBTF on rDNA. Formation of SL1/TIF-IB excludes the association of TBP with TFIID subunits. The polypeptide is TATA box-binding protein-associated factor RNA polymerase I subunit D (Taf1d) (Rattus norvegicus (Rat)).